A 1116-amino-acid chain; its full sequence is Angiopoietin-1 receptor (1116 aa).

A signal peptide spans 1 to 21; the sequence is MCLLDSCTALLLLGCWMSGSA. Residues 22-745 are Extracellular-facing; the sequence is VRISDVTLVN…FAAHGHLLLY (724 aa). The cysteines at positions 46 and 106 are disulfide-linked. The Ig-like C2-type 1 domain maps to 46-126; it reads CVSSDWSSGG…YTYKMLQEAA (81 aa). N-linked (GlcNAc...) asparagine glycosylation is found at Asn-110, Asn-143, and Asn-223. EGF-like domains are found at residues 214–256, 258–302, and 304–342; these read SCRA…HTCD, VCGE…LSCN, and ACPDGYYGAGCTQKCVCAKGRCDRFRGCVCAGRHGSRCE. Intrachain disulfides connect Cys-215-Cys-224, Cys-228-Cys-237, Cys-231-Cys-244, Cys-246-Cys-255, Cys-259-Cys-268, Cys-272-Cys-277, Cys-283-Cys-290, Cys-292-Cys-301, Cys-305-Cys-314, Cys-318-Cys-325, Cys-320-Cys-331, and Cys-333-Cys-341. Residues 348–438 enclose the Ig-like C2-type 2 domain; that stretch reads PVISHLRDVE…MQVEDEFTVE (91 aa). N-linked (GlcNAc...) asparagine glycans are attached at residues Asn-367, Asn-387, and Asn-425. Cys-368 and Cys-422 are oxidised to a cystine. 3 consecutive Fibronectin type-III domains span residues 444–538, 540–633, and 634–729; these read RPQN…TQVL, LPVG…QLPP, and PPAN…TLPQ. Asn-590, Asn-637, and Asn-642 each carry an N-linked (GlcNAc...) asparagine glycan. Residues 746–766 form a helical membrane-spanning segment; sequence AILGSAGMTCCTVLLAFCIVL. At 767 to 1116 the chain is on the cytoplasmic side; it reads QLKRNTLQRR…GIDCSAEEAG (350 aa). Residues 816 to 1095 form the Protein kinase domain; the sequence is IQFQDVLGEG…RMLEERKTYV (280 aa). ATP contacts are provided by residues 822–830 and Lys-847; that span reads LGEGNFGQV. Position 852 is a phosphotyrosine; by autocatalysis (Tyr-852). The Proton acceptor role is filled by Asp-956. Tyr-984, Tyr-1094, and Tyr-1100 each carry phosphotyrosine; by autocatalysis.

The protein belongs to the protein kinase superfamily. Tyr protein kinase family. Tie subfamily. As to quaternary structure, interacts with svep1. Post-translationally, autophosphorylated on tyrosine residues in response to ligand binding. Autophosphorylation occurs in trans, i.e. one subunit of the dimeric receptor phosphorylates tyrosine residues on the other subunit. Autophosphorylation occurs in a sequential manner, where Tyr-984 in the kinase activation loop is phosphorylated first, followed by autophosphorylation at additional tyrosine residues. Phosphorylation is important for interaction with scaffold proteins and effectors.

It localises to the cell membrane. The protein resides in the cell junction. Its subcellular location is the focal adhesion. It is found in the cytoplasm. The protein localises to the cytoskeleton. The catalysed reaction is L-tyrosyl-[protein] + ATP = O-phospho-L-tyrosyl-[protein] + ADP + H(+). With respect to regulation, angiopoietin binding leads to receptor dimerization and activation by autophosphorylation at Tyr-984 on the kinase activation loop. Its function is as follows. Tyrosine-protein kinase that acts as a cell-surface receptor for angiopoietins and regulates angiogenesis, endothelial cell survival, proliferation, migration, adhesion and cell spreading, reorganization of the actin cytoskeleton, but also maintenance of vascular quiescence. Can activate or inhibit angiogenesis, depending on the context. Angiopoietin signaling triggers receptor dimerization and autophosphorylation at specific tyrosine residues that then serve as binding sites for scaffold proteins and effectors. In Danio rerio (Zebrafish), this protein is Angiopoietin-1 receptor.